Consider the following 211-residue polypeptide: Pyridoxine/pyridoxamine 5'-phosphate oxidase (211 aa).

Substrate-binding positions include R8–Y11 and K66. FMN-binding positions include R61–K66, F76–T77, K83, and Q105. Y123, R127, and S131 together coordinate substrate. FMN is bound by residues Q140–S141 and W184. Position 190–192 (R190–H192) interacts with substrate. R194 serves as a coordination point for FMN.

The protein belongs to the pyridoxamine 5'-phosphate oxidase family. As to quaternary structure, homodimer. Requires FMN as cofactor.

The enzyme catalyses pyridoxamine 5'-phosphate + O2 + H2O = pyridoxal 5'-phosphate + H2O2 + NH4(+). It carries out the reaction pyridoxine 5'-phosphate + O2 = pyridoxal 5'-phosphate + H2O2. It functions in the pathway cofactor metabolism; pyridoxal 5'-phosphate salvage; pyridoxal 5'-phosphate from pyridoxamine 5'-phosphate: step 1/1. It participates in cofactor metabolism; pyridoxal 5'-phosphate salvage; pyridoxal 5'-phosphate from pyridoxine 5'-phosphate: step 1/1. Catalyzes the oxidation of either pyridoxine 5'-phosphate (PNP) or pyridoxamine 5'-phosphate (PMP) into pyridoxal 5'-phosphate (PLP). This chain is Pyridoxine/pyridoxamine 5'-phosphate oxidase, found in Polynucleobacter asymbioticus (strain DSM 18221 / CIP 109841 / QLW-P1DMWA-1) (Polynucleobacter necessarius subsp. asymbioticus).